A 200-amino-acid chain; its full sequence is Cytochrome c biogenesis ATP-binding export protein CcmA (200 aa).

Residues 1–200 (MRLSGNGLRC…ARELRIGGAA (200 aa)) form the ABC transporter domain. 35–42 (GPNGAGKT) lines the ATP pocket.

The protein belongs to the ABC transporter superfamily. CcmA exporter (TC 3.A.1.107) family. As to quaternary structure, the complex is composed of two ATP-binding proteins (CcmA) and two transmembrane proteins (CcmB).

The protein localises to the cell inner membrane. The catalysed reaction is heme b(in) + ATP + H2O = heme b(out) + ADP + phosphate + H(+). In terms of biological role, part of the ABC transporter complex CcmAB involved in the biogenesis of c-type cytochromes; once thought to export heme, this seems not to be the case, but its exact role is uncertain. Responsible for energy coupling to the transport system. This Nitrobacter winogradskyi (strain ATCC 25391 / DSM 10237 / CIP 104748 / NCIMB 11846 / Nb-255) protein is Cytochrome c biogenesis ATP-binding export protein CcmA.